The primary structure comprises 74 residues: MQLFVRAQKLHTLEVTGQETVAQIKAHVASLEGIAPEDQVVLLAGAPLEDEATLGQCGVEALTTLEVAGRMLGG.

Belongs to the ubiquitin family.

The protein is Ubiquitin-like protein FUBI (FAU) of Pongo abelii (Sumatran orangutan).